A 150-amino-acid polypeptide reads, in one-letter code: Ribonuclease H (150 aa).

Positions 1 to 142 (MSDSVELFTD…ADQLANRGVD (142 aa)) constitute an RNase H type-1 domain. Positions 10, 48, 70, and 134 each coordinate Mg(2+).

The protein belongs to the RNase H family. As to quaternary structure, monomer. It depends on Mg(2+) as a cofactor.

It is found in the cytoplasm. It catalyses the reaction Endonucleolytic cleavage to 5'-phosphomonoester.. Functionally, endonuclease that specifically degrades the RNA of RNA-DNA hybrids. This is Ribonuclease H from Pseudomonas syringae pv. syringae (strain B728a).